A 181-amino-acid chain; its full sequence is Large ribosomal subunit protein uL16 (181 aa).

Belongs to the universal ribosomal protein uL16 family. As to quaternary structure, part of the 50S ribosomal subunit.

This is Large ribosomal subunit protein uL16 from Pyrococcus furiosus (strain ATCC 43587 / DSM 3638 / JCM 8422 / Vc1).